Here is a 333-residue protein sequence, read N- to C-terminus: MSINVTEIVLHQIHQTEGETSELNTVLRDNLLAISPEVEQMMLQLHQAYQSKAKAYGIFKNESIFAQQLNRLLEQETDFLPFSHSCAKMLSSELAKYPFASGGTFILCRYNFLATDYLFIALIDSRTSMLVDDQLEIKRTEYLDITQYDIACRINLTELKINAQSNRYLTFIKGRVGRKIADFFMDFLSAEEGLNPQLQNQTLLQAVSDYCDQGELSAPQTREVKKQVFEYCKGQINSGEEIALSELSEALPTLNEVDFAQFTQEQEYGLEENIPPVRNALKTLTKYSGSGKGVTISFNADLLGERLIWDELNDTLTIKGLPANLRDQLARNK.

This sequence belongs to the YejK family.

The protein resides in the cytoplasm. Its subcellular location is the nucleoid. This is Nucleoid-associated protein APL_0429 from Actinobacillus pleuropneumoniae serotype 5b (strain L20).